A 206-amino-acid chain; its full sequence is Large ribosomal subunit protein uL4 (206 aa).

A disordered region spans residues Met63 to His98. Over residues Tyr64–Ser76 the composition is skewed to basic residues.

This sequence belongs to the universal ribosomal protein uL4 family. In terms of assembly, part of the 50S ribosomal subunit.

Its function is as follows. One of the primary rRNA binding proteins, this protein initially binds near the 5'-end of the 23S rRNA. It is important during the early stages of 50S assembly. It makes multiple contacts with different domains of the 23S rRNA in the assembled 50S subunit and ribosome. In terms of biological role, forms part of the polypeptide exit tunnel. This chain is Large ribosomal subunit protein uL4, found in Chelativorans sp. (strain BNC1).